The sequence spans 324 residues: Olfactory receptor 8U3 (324 aa).

At 1–25 the chain is on the extracellular side; sequence MAEVNIIYVTVFILKGITNRPELQA. A helical membrane pass occupies residues 26–46; sequence PCFGVFLVIYLVTVLGNLGLI. The Cytoplasmic portion of the chain corresponds to 47–54; it reads TLIKIDTR. A helical transmembrane segment spans residues 55-75; it reads LHTPMYYFLSHLAFVDLCYSS. Residues 76–99 are Extracellular-facing; it reads AITPKMMVNFVVERNTIPFHACAT. A disulfide bridge connects residues Cys97 and Cys189. Residues 100-120 traverse the membrane as a helical segment; sequence QLGCFLTFMITECFLLASMAY. Residues 121–139 are Cytoplasmic-facing; sequence DCYVAICSPLHYSTLMSRR. Residues 140 to 160 traverse the membrane as a helical segment; the sequence is VCIQLVAVPYIYSFLVALFHT. The Extracellular segment spans residues 161 to 196; the sequence is VITFRLTYCGPNLINHFYCDDLPFLALSCSDTHMKE. The helical transmembrane segment at 197–217 threads the bilayer; sequence ILIFAFAGFDMISSSSIVLTS. Topologically, residues 218–237 are cytoplasmic; the sequence is YIFIIAAILRIRSTQGQHKA. The helical transmembrane segment at 238-258 threads the bilayer; the sequence is ISTCGSHMVTVTIFYGTLIFM. The Extracellular segment spans residues 259–271; the sequence is YLQPKSNHSLDTD. Asn265 carries N-linked (GlcNAc...) asparagine glycosylation. Residues 272–292 traverse the membrane as a helical segment; that stretch reads KMASVFYTVVIPMLNPLIYSL. Topologically, residues 293 to 324 are cytoplasmic; sequence RNKEVKDASKKALDKGCENLQILTFLKIRKLY.

The protein belongs to the G-protein coupled receptor 1 family.

It localises to the cell membrane. In terms of biological role, odorant receptor. The protein is Olfactory receptor 8U3 of Homo sapiens (Human).